The following is a 141-amino-acid chain: Large ribosomal subunit protein uL11 (141 aa).

It belongs to the universal ribosomal protein uL11 family. As to quaternary structure, part of the ribosomal stalk of the 50S ribosomal subunit. Interacts with L10 and the large rRNA to form the base of the stalk. L10 forms an elongated spine to which L12 dimers bind in a sequential fashion forming a multimeric L10(L12)X complex. In terms of processing, one or more lysine residues are methylated.

In terms of biological role, forms part of the ribosomal stalk which helps the ribosome interact with GTP-bound translation factors. The polypeptide is Large ribosomal subunit protein uL11 (Nostoc sp. (strain PCC 7120 / SAG 25.82 / UTEX 2576)).